The chain runs to 303 residues: Aspartate carbamoyltransferase catalytic subunit (303 aa).

Positions 49 and 50 each coordinate carbamoyl phosphate. Position 77 (lysine 77) interacts with L-aspartate. Residues arginine 99, histidine 126, and glutamine 129 each contribute to the carbamoyl phosphate site. L-aspartate is bound by residues arginine 159 and arginine 211. Carbamoyl phosphate is bound by residues serine 252 and proline 253.

Belongs to the aspartate/ornithine carbamoyltransferase superfamily. ATCase family. As to quaternary structure, heterododecamer (2C3:3R2) of six catalytic PyrB chains organized as two trimers (C3), and six regulatory PyrI chains organized as three dimers (R2).

It catalyses the reaction carbamoyl phosphate + L-aspartate = N-carbamoyl-L-aspartate + phosphate + H(+). It functions in the pathway pyrimidine metabolism; UMP biosynthesis via de novo pathway; (S)-dihydroorotate from bicarbonate: step 2/3. Functionally, catalyzes the condensation of carbamoyl phosphate and aspartate to form carbamoyl aspartate and inorganic phosphate, the committed step in the de novo pyrimidine nucleotide biosynthesis pathway. In Listeria monocytogenes serotype 4b (strain F2365), this protein is Aspartate carbamoyltransferase catalytic subunit.